The primary structure comprises 183 residues: NADH-quinone oxidoreductase subunit I (183 aa).

4Fe-4S ferredoxin-type domains are found at residues 44–74 and 90–119; these read LNRW…VEAG and RVYQ…MTNE. The [4Fe-4S] cluster site is built by Cys-54, Cys-57, Cys-60, Cys-64, Cys-99, Cys-102, Cys-105, and Cys-109. The segment at 143-183 is disordered; that stretch reads QGMEAPPHPMRLGETEKDYYRLGRDDNAAARADEQNSEAVQ. Over residues 153 to 176 the composition is skewed to basic and acidic residues; sequence RLGETEKDYYRLGRDDNAAARADE.

This sequence belongs to the complex I 23 kDa subunit family. NDH-1 is composed of 14 different subunits. Subunits NuoA, H, J, K, L, M, N constitute the membrane sector of the complex. The cofactor is [4Fe-4S] cluster.

It localises to the cell membrane. The catalysed reaction is a quinone + NADH + 5 H(+)(in) = a quinol + NAD(+) + 4 H(+)(out). In terms of biological role, NDH-1 shuttles electrons from NADH, via FMN and iron-sulfur (Fe-S) centers, to quinones in the respiratory chain. The immediate electron acceptor for the enzyme in this species is believed to be ubiquinone. Couples the redox reaction to proton translocation (for every two electrons transferred, four hydrogen ions are translocated across the cytoplasmic membrane), and thus conserves the redox energy in a proton gradient. In Thermobifida fusca (strain YX), this protein is NADH-quinone oxidoreductase subunit I.